The following is a 98-amino-acid chain: Parvalbumin beta 1 (98 aa).

S1 is subject to N-acetylserine. 2 EF-hand domains span residues 32 to 67 (KIGL…FSAG) and 67 to 98 (GARA…MIKG). 11 residues coordinate Ca(2+): D45, D47, S49, F51, E53, E56, D80, D82, D84, K86, and E91.

This sequence belongs to the parvalbumin family.

In terms of biological role, in muscle, parvalbumin is thought to be involved in relaxation after contraction. It binds two calcium ions. This chain is Parvalbumin beta 1, found in Macruronus magellanicus (Patagonian grenadier).